The primary structure comprises 315 residues: HTH-type transcriptional regulator TreR (315 aa).

In terms of domain architecture, HTH lacI-type spans 5–59 (LTIKDIARLSGVGKSTVSRVLNNESGVSERTRERVEAVMNQHGFSPSRSARAMRG). Positions 7 to 26 (IKDIARLSGVGKSTVSRVLN) form a DNA-binding region, H-T-H motif. Residues 71–77 (RLDSLSE), G126, R147, 187–190 (DITT), R194, T242, and Y284 contribute to the alpha,alpha-trehalose 6-phosphate site.

As to quaternary structure, homodimer.

Repressor of the treBC operon. It is able to bind trehalose-6-phosphate. The protein is HTH-type transcriptional regulator TreR (treR) of Salmonella typhimurium (strain LT2 / SGSC1412 / ATCC 700720).